Consider the following 393-residue polypeptide: Beta-ureidopropionase (393 aa).

A CN hydrolase domain is found at 72 to 344 (VRVGLVQNRI…DGLLVTELNL (273 aa)). Catalysis depends on glutamate 119, which acts as the Proton acceptor. Lysine 196 acts as the Proton donor in catalysis. Cysteine 233 serves as the catalytic Nucleophile. Serine 378 bears the Phosphoserine mark.

The protein belongs to the carbon-nitrogen hydrolase superfamily. BUP family. In terms of assembly, homodimer, homotetramer, homooctamer; can also form higher homooligomers. In terms of processing, the N-terminus is blocked. Detected in liver (at protein level).

The protein resides in the cytoplasm. It carries out the reaction 3-(carbamoylamino)propanoate + H2O + 2 H(+) = beta-alanine + NH4(+) + CO2. The catalysed reaction is 3-(carbamoylamino)-2-methylpropanoate + H2O + 2 H(+) = (R)-3-amino-2-methylpropanoate + NH4(+) + CO2. Its pathway is amino-acid biosynthesis; beta-alanine biosynthesis. Allosteric enzyme with positive cooperativity toward the substrate N-carbamoyl-beta-alanine at low substrate concentrations (below 12 nM). Displays no cooperativity at substrate levels above 12 nM. Catalyzes a late step in pyrimidine degradation. Converts N-carbamoyl-beta-alanine (3-ureidopropanoate) into beta-alanine, ammonia and carbon dioxide. Likewise, converts N-carbamoyl-beta-aminoisobutyrate (3-ureidoisobutyrate) into beta-aminoisobutyrate, ammonia and carbon dioxide. The chain is Beta-ureidopropionase (Upb1) from Rattus norvegicus (Rat).